Consider the following 779-residue polypeptide: Ribonucleoside-diphosphate reductase large subunit (779 aa).

Substrate-binding positions include Ser-178, 193–194, Gly-222, 420–424, and 614–618; these read SC, NLCIE, and PTATS. Cysteines 194 and 440 form a disulfide. Asn-420 serves as the catalytic Proton acceptor. The active-site Cysteine radical intermediate is Cys-422. The Proton acceptor role is filled by Glu-424.

The protein belongs to the ribonucleoside diphosphate reductase large chain family. Heterotetramer composed of a homodimer of the large subunit (R1) and a homodimer of the small subunit (R2). Larger multisubunit protein complex are also active, composed of (R1)n(R2)n.

It carries out the reaction a 2'-deoxyribonucleoside 5'-diphosphate + [thioredoxin]-disulfide + H2O = a ribonucleoside 5'-diphosphate + [thioredoxin]-dithiol. With respect to regulation, under complex allosteric control mediated by deoxynucleoside triphosphates and ATP binding. The type of nucleotide bound at the specificity site determines substrate preference. It seems probable that ATP makes the enzyme reduce CDP and UDP, dGTP favors ADP reduction and dTTP favors GDP reduction. In terms of biological role, ribonucleoside-diphosphate reductase holoenzyme provides the precursors necessary for viral DNA synthesis. Allows virus growth in non-dividing cells. Catalyzes the biosynthesis of deoxyribonucleotides from the corresponding ribonucleotides. The polypeptide is Ribonucleoside-diphosphate reductase large subunit (Ornithodoros (relapsing fever ticks)).